Reading from the N-terminus, the 246-residue chain is 5-oxoprolinase subunit A (246 aa).

The protein belongs to the LamB/PxpA family. As to quaternary structure, forms a complex composed of PxpA, PxpB and PxpC.

It carries out the reaction 5-oxo-L-proline + ATP + 2 H2O = L-glutamate + ADP + phosphate + H(+). In terms of biological role, catalyzes the cleavage of 5-oxoproline to form L-glutamate coupled to the hydrolysis of ATP to ADP and inorganic phosphate. In Cupriavidus pinatubonensis (strain JMP 134 / LMG 1197) (Cupriavidus necator (strain JMP 134)), this protein is 5-oxoprolinase subunit A.